Consider the following 214-residue polypeptide: GTP cyclohydrolase 1 (214 aa).

3 residues coordinate Zn(2+): cysteine 108, histidine 111, and cysteine 179.

It belongs to the GTP cyclohydrolase I family. Toroid-shaped homodecamer, composed of two pentamers of five dimers.

It catalyses the reaction GTP + H2O = 7,8-dihydroneopterin 3'-triphosphate + formate + H(+). It participates in cofactor biosynthesis; 7,8-dihydroneopterin triphosphate biosynthesis; 7,8-dihydroneopterin triphosphate from GTP: step 1/1. The polypeptide is GTP cyclohydrolase 1 (Shewanella putrefaciens (strain CN-32 / ATCC BAA-453)).